The primary structure comprises 122 residues: Putative iron-sulfur cluster insertion protein ErpA (122 aa).

Positions 50, 114, and 116 each coordinate iron-sulfur cluster.

This sequence belongs to the HesB/IscA family. Homodimer. Iron-sulfur cluster is required as a cofactor.

Required for insertion of 4Fe-4S clusters. This is Putative iron-sulfur cluster insertion protein ErpA from Cupriavidus necator (strain ATCC 17699 / DSM 428 / KCTC 22496 / NCIMB 10442 / H16 / Stanier 337) (Ralstonia eutropha).